We begin with the raw amino-acid sequence, 225 residues long: Deoxyribose-phosphate aldolase (225 aa).

Asp-96 acts as the Proton donor/acceptor in catalysis. The active-site Schiff-base intermediate with acetaldehyde is Lys-157. Residue Lys-185 is the Proton donor/acceptor of the active site.

Belongs to the DeoC/FbaB aldolase family. DeoC type 1 subfamily.

It localises to the cytoplasm. The catalysed reaction is 2-deoxy-D-ribose 5-phosphate = D-glyceraldehyde 3-phosphate + acetaldehyde. It participates in carbohydrate degradation; 2-deoxy-D-ribose 1-phosphate degradation; D-glyceraldehyde 3-phosphate and acetaldehyde from 2-deoxy-alpha-D-ribose 1-phosphate: step 2/2. Functionally, catalyzes a reversible aldol reaction between acetaldehyde and D-glyceraldehyde 3-phosphate to generate 2-deoxy-D-ribose 5-phosphate. The chain is Deoxyribose-phosphate aldolase from Microcystis aeruginosa (strain NIES-843 / IAM M-2473).